Consider the following 227-residue polypeptide: Small ribosomal subunit protein uS3 (227 aa).

Positions 39 to 107 (VRQLLQKRLK…PVHITIEEVR (69 aa)) constitute a KH type-2 domain.

Belongs to the universal ribosomal protein uS3 family. Part of the 30S ribosomal subunit. Forms a tight complex with proteins S10 and S14.

In terms of biological role, binds the lower part of the 30S subunit head. Binds mRNA in the 70S ribosome, positioning it for translation. The protein is Small ribosomal subunit protein uS3 of Coxiella burnetii (strain CbuK_Q154) (Coxiella burnetii (strain Q154)).